Consider the following 177-residue polypeptide: VQ motif-containing protein 11 (177 aa).

The short motif at 25-34 is the VQ element; that stretch reads FRNIVQKLTG. Phosphoserine is present on residues Ser43, Ser99, Ser115, Ser142, and Ser145. Basic and acidic residues predominate over residues 115–133; the sequence is SAREEHHAQPDKEEQKAIA. A disordered region spans residues 115–177; sequence SAREEHHAQP…RIHEDNHRDS (63 aa). Over residues 148 to 159 the composition is skewed to low complexity; it reads EPAPELLPLFPL. Ser161 is subject to Phosphoserine. Positions 168-177 are enriched in basic and acidic residues; that stretch reads RIHEDNHRDS.

Phosphorylated on serine residues by MPK6.

It localises to the nucleus. In terms of biological role, may modulate WRKY transcription factor activities. This Arabidopsis thaliana (Mouse-ear cress) protein is VQ motif-containing protein 11.